The primary structure comprises 124 residues: Glycine cleavage system H protein (124 aa).

The Lipoyl-binding domain maps to 19-101; sequence VATVGITDHA…ESGAWFFRMT (83 aa). Lys-60 is subject to N6-lipoyllysine.

Belongs to the GcvH family. As to quaternary structure, the glycine cleavage system is composed of four proteins: P, T, L and H. Requires (R)-lipoate as cofactor.

Its function is as follows. The glycine cleavage system catalyzes the degradation of glycine. The H protein shuttles the methylamine group of glycine from the P protein to the T protein. The sequence is that of Glycine cleavage system H protein from Acidiphilium cryptum (strain JF-5).